The sequence spans 141 residues: Large ribosomal subunit protein uL14m (141 aa).

Residues 1–19 (MALSLSGLILPKLMQQRAF) constitute a mitochondrion transit peptide.

This sequence belongs to the universal ribosomal protein uL14 family. As to quaternary structure, component of the mitochondrial ribosome large subunit (39S) which comprises a 16S rRNA and about 50 distinct proteins. Interacts with MALSU1.

It is found in the mitochondrion. In terms of biological role, may form part of 2 intersubunit bridges in the assembled ribosome. Upon binding to MALSU1, intersubunit bridge formation is blocked, preventing ribosome formation and repressing translation. The polypeptide is Large ribosomal subunit protein uL14m (mrpl14) (Danio rerio (Zebrafish)).